The following is a 276-amino-acid chain: Cholesterol 25-hydroxylase-like protein 1, member 2 (276 aa).

N30 carries an N-linked (GlcNAc...) asparagine glycan. The next 3 helical transmembrane spans lie at 39 to 59 (LFPVVLTVSSYFVLVLPYLSC), 90 to 110 (GVTLYNHILLVIPAAVAQWMW), and 126 to 146 (LVGGVTGNLLLFDLQYFIWHF). Residues 134–265 (LLLFDLQYFI…FSHWDKMFGT (132 aa)) enclose the Fatty acid hydroxylase domain. The Histidine box-1 motif lies at 144–148 (WHFLH). The short motif at 159–163 (HAIHH) is the Histidine box-2 element. A glycan (N-linked (GlcNAc...) asparagine) is linked at N164. 2 helical membrane-spanning segments follow: residues 175 to 195 (CLGGWELVTVGFWTTLNPVLL) and 199 to 219 (LLTTWMFMVVHVYVSVEDHCG). A Histidine box-3 motif is present at residues 240 to 246 (KHDVHHQ).

This sequence belongs to the sterol desaturase family. It depends on Fe cation as a cofactor.

The protein localises to the endoplasmic reticulum membrane. Its function is as follows. May catalyze the formation of 25-hydroxycholesterol from cholesterol. The protein is Cholesterol 25-hydroxylase-like protein 1, member 2 of Danio rerio (Zebrafish).